We begin with the raw amino-acid sequence, 418 residues long: UDP-N-acetylglucosamine 1-carboxyvinyltransferase (418 aa).

Residue 22–23 coordinates phosphoenolpyruvate; sequence KN. Arginine 92 serves as a coordination point for UDP-N-acetyl-alpha-D-glucosamine. The active-site Proton donor is cysteine 116. The residue at position 116 (cysteine 116) is a 2-(S-cysteinyl)pyruvic acid O-phosphothioketal. UDP-N-acetyl-alpha-D-glucosamine contacts are provided by residues 121-125, aspartate 305, and leucine 327; that span reads RPIDL.

The protein belongs to the EPSP synthase family. MurA subfamily.

The protein localises to the cytoplasm. The enzyme catalyses phosphoenolpyruvate + UDP-N-acetyl-alpha-D-glucosamine = UDP-N-acetyl-3-O-(1-carboxyvinyl)-alpha-D-glucosamine + phosphate. The protein operates within cell wall biogenesis; peptidoglycan biosynthesis. Cell wall formation. Adds enolpyruvyl to UDP-N-acetylglucosamine. This chain is UDP-N-acetylglucosamine 1-carboxyvinyltransferase, found in Campylobacter lari (strain RM2100 / D67 / ATCC BAA-1060).